Consider the following 320-residue polypeptide: Fructose-1,6-bisphosphatase class 1 (320 aa).

Positions 105, 124, 126, and 127 each coordinate Mg(2+). Substrate-binding positions include 127–130, Tyr233, and Lys263; that span reads DGSS. Glu269 serves as a coordination point for Mg(2+).

It belongs to the FBPase class 1 family. Homotetramer. It depends on Mg(2+) as a cofactor.

It localises to the cytoplasm. The catalysed reaction is beta-D-fructose 1,6-bisphosphate + H2O = beta-D-fructose 6-phosphate + phosphate. It participates in carbohydrate biosynthesis; gluconeogenesis. The sequence is that of Fructose-1,6-bisphosphatase class 1 from Methanocorpusculum labreanum (strain ATCC 43576 / DSM 4855 / Z).